The following is a 344-amino-acid chain: Nicotinate-nucleotide--dimethylbenzimidazole phosphoribosyltransferase (344 aa).

Residue Glu-311 is the Proton acceptor of the active site.

This sequence belongs to the CobT family.

The catalysed reaction is 5,6-dimethylbenzimidazole + nicotinate beta-D-ribonucleotide = alpha-ribazole 5'-phosphate + nicotinate + H(+). The protein operates within nucleoside biosynthesis; alpha-ribazole biosynthesis; alpha-ribazole from 5,6-dimethylbenzimidazole: step 1/2. Functionally, catalyzes the synthesis of alpha-ribazole-5'-phosphate from nicotinate mononucleotide (NAMN) and 5,6-dimethylbenzimidazole (DMB). The sequence is that of Nicotinate-nucleotide--dimethylbenzimidazole phosphoribosyltransferase from Aromatoleum aromaticum (strain DSM 19018 / LMG 30748 / EbN1) (Azoarcus sp. (strain EbN1)).